A 627-amino-acid polypeptide reads, in one-letter code: Neuronal acetylcholine receptor subunit alpha-4 (627 aa).

The first 28 residues, 1–28 (MELGGPGAPRLLPPLLLLLGTGLLRASS), serve as a signal peptide directing secretion. Residues 29–242 (HVETRAHAEE…ITYAFVIRRL (214 aa)) lie on the Extracellular side of the membrane. N-linked (GlcNAc...) asparagine glycosylation is present at asparagine 57. Ca(2+)-binding residues include valine 76 and glutamate 78. Residues asparagine 107 and asparagine 174 are each glycosylated (N-linked (GlcNAc...) asparagine). Cystine bridges form between cysteine 161/cysteine 175 and cysteine 225/cysteine 226. Residues 243–267 (PLFYTINLIIPCLLISCLTVLVFYL) traverse the membrane as a helical segment. A lipid anchor (S-palmitoyl cysteine) is attached at cysteine 271. A run of 2 helical transmembrane segments spans residues 275 to 293 (ITLC…LLIT) and 309 to 330 (YLLF…VLNV). At 331 to 600 (HHRSPRTHTM…WKYVAMVIDR (270 aa)) the chain is on the cytoplasmic side. 2 disordered regions span residues 382 to 479 (PRFW…EAVE) and 497 to 559 (DATS…RHLP). Phosphoserine is present on residues serine 424, serine 538, and serine 541. A helical membrane pass occupies residues 601–619 (IFLWMFIIVCLLGTVGLFL).

This sequence belongs to the ligand-gated ion channel (TC 1.A.9) family. Acetylcholine receptor (TC 1.A.9.1) subfamily. Alpha-4/CHRNA4 sub-subfamily. In terms of assembly, neuronal AChR is composed of two different types of subunits: alpha and beta. CHRNA4 forms heteropentameric neuronal acetylcholine receptors with CHRNB2 and CHRNB4, as well as CHRNA5 and CHRNB3 as accesory subunits. Found in two major stoichiometric forms, LS (low agonist sensitivity): (CHRNA4)3:(CHRNB2)2 and HS (high agonist sensitivity): (CHRNA4)2:(CHRNB2)3, the two stoichiometric forms differ in their unitary conductance, calcium permeability, ACh sensitivity and potentiation by divalent cation. Cells produce predominantly an (CHRNA4)3:(CHRNB2)2 nAChR. The (CHRNA4)2:(CHRNB2)3 expression is selectively up-regulated by nicotine and has lower single channel conductance and calcium permeability. In the striatum, also forms CHRNA4:CHRNA6:CHRNB2 complexes. Also found in the stoichiometric form: (CHRNA4:CHRNB2)2:CHRNB3. Interacts with RIC3; which is required for proper folding and assembly. Interacts with LYPD6.

It localises to the synaptic cell membrane. The protein resides in the cell membrane. The enzyme catalyses Ca(2+)(in) = Ca(2+)(out). It carries out the reaction K(+)(in) = K(+)(out). The catalysed reaction is Na(+)(in) = Na(+)(out). Activated by a myriad of ligands such as acetylcholine, cytisine, nicotine, choline and epibatidine. Channel potentiation by calcium is stoichiometry-selective, CHRNA4:CHRNB2 nACh receptor is achieved by calcium association with topographically distinct sites framed by anionic residues within the CHRNA4 subunit and between the CHRNA4 and CHRNB2 subunits. nAChR activity is inhibited by the antagonist alpha-conotoxins BuIA, PnIA, GID and MII, small disulfide-constrained peptides from cone snails. Component of neuronal acetylcholine receptors (nAChRs) that function as pentameric, ligand-gated cation channels with high calcium permeability among other activities. nAChRs are excitatory neurotrasnmitter receptors formed by a collection of nAChR subunits known to mediate synaptic transmission in the nervous system and the neuromuscular junction. Each nAchR subunit confers differential attributes to channel properties, including activation, deactivation and desensitization kinetics, pH sensitivity, cation permeability, and binding to allosteric modulators. CHRNA4 forms heteropentameric neuronal acetylcholine receptors with CHRNB2 and CHRNB4, as well as CHRNA5 and CHRNB3 as accesory subunits. Is the most abundant nAChR subtype expressed in the central nervous system. Found in two major stoichiometric forms,(CHRNA4)3:(CHRNB2)2 and (CHRNA4)2:(CHRNB2)3, the two stoichiometric forms differ in their unitary conductance, calcium permeability, ACh sensitivity and potentiation by divalent cation. Involved in the modulation of calcium-dependent signaling pathways, influences the release of neurotransmitters, including dopamine, glutamate and GABA. The chain is Neuronal acetylcholine receptor subunit alpha-4 (CHRNA4) from Pan troglodytes (Chimpanzee).